Here is a 545-residue protein sequence, read N- to C-terminus: Labda-7,13-dienyl diphosphate synthase (545 aa).

A DXDDTA motif motif is present at residues 315-320; it reads DADDTA. An RXXDGSW motif motif is present at residues 444 to 450; that stretch reads RRTDGSW. The tract at residues 526–545 is disordered; that stretch reads LPAPAPVPPGFDAARTGPAD.

This sequence belongs to the terpene synthase family. It depends on Mg(2+) as a cofactor.

The catalysed reaction is (2E,6E,10E)-geranylgeranyl diphosphate = (13E)-labda-7,13-dien-15-yl diphosphate. Functionally, involved in the biosynthesis of the labdane-type bicyclic diterpene labda-7,13(16),14-triene. Catalyzes the conversion of geranylgeranyl diphosphate (GGDP) into labda-7,13(E)-dienyl diphosphate. This is Labda-7,13-dienyl diphosphate synthase from Streptomyces clavuligerus.